Reading from the N-terminus, the 209-residue chain is Cytidylate kinase (209 aa).

Residue glycine 7–serine 15 coordinates ATP.

The protein belongs to the cytidylate kinase family. Type 1 subfamily.

The protein localises to the cytoplasm. It carries out the reaction CMP + ATP = CDP + ADP. The enzyme catalyses dCMP + ATP = dCDP + ADP. The chain is Cytidylate kinase from Deinococcus geothermalis (strain DSM 11300 / CIP 105573 / AG-3a).